Here is a 109-residue protein sequence, read N- to C-terminus: Protein TAR1 (109 aa).

The segment at 62-109 (HFTNNWDPRHTGFSPSMTSCSKEHRQGPATKLPSSNYNSDVEDARFQI) is disordered.

Its subcellular location is the mitochondrion. Functionally, may be involved in mtDNA stability or mitochondrial gene expression regulation at the post-transcriptional level. This chain is Protein TAR1 (TAR1-A), found in Kluyveromyces lactis (strain ATCC 8585 / CBS 2359 / DSM 70799 / NBRC 1267 / NRRL Y-1140 / WM37) (Yeast).